The chain runs to 396 residues: Elongation factor Tu (396 aa).

Residues 10–206 (KPHVNVGTIG…ALDSYIPEPE (197 aa)) form the tr-type G domain. The G1 stretch occupies residues 19–26 (GHVDHGKT). Position 19–26 (19–26 (GHVDHGKT)) interacts with GTP. Thr26 lines the Mg(2+) pocket. Residues 60–64 (GITIN) form a G2 region. A G3 region spans residues 81–84 (DCPG). Residues 81-85 (DCPGH) and 136-139 (NKAD) each bind GTP. Residues 136-139 (NKAD) are G4. Residues 174 to 176 (SAL) form a G5 region.

This sequence belongs to the TRAFAC class translation factor GTPase superfamily. Classic translation factor GTPase family. EF-Tu/EF-1A subfamily. As to quaternary structure, monomer.

The protein resides in the cytoplasm. It catalyses the reaction GTP + H2O = GDP + phosphate + H(+). Its function is as follows. GTP hydrolase that promotes the GTP-dependent binding of aminoacyl-tRNA to the A-site of ribosomes during protein biosynthesis. The chain is Elongation factor Tu from Nitrosomonas europaea (strain ATCC 19718 / CIP 103999 / KCTC 2705 / NBRC 14298).